A 1320-amino-acid polypeptide reads, in one-letter code: MSLQGSYQHFCLWMFLGTTLALGQGQVSSRLRLAVLPEDQLQMKWREAEGSGLGFLVQVTPMAGDLEQELILTTKTPKATVGGLNPSKSYTLQIFELTDSGPILLARREFVIEDLKSQSLGRGSRRLAGATLEPTSLPLRGPDSEKTSEPSIAFTLSRDLPILDHPQFQCTPPTPADIIFLVDGSWSIGHNHFQQVKDFLASIITQFAIGPDKVQVGLTQYSGDPQTEWDLNSFQTKEQVLAAVHHLRYKGGNTFTGLALTHVLEQNLKPAAGVRPEAAKVLILVTDGKSQDDVRTAARILKDQDIDVFVVGVKNVDEAELKLLASQPLDITVHNVLDFPQLDTLAPLLSRLICQKIQGRGPVKPAAGTRVLDPLPTPTRLILTHATSSSIHLSWTPALYPPLKYLIVWQPSRGGAPKEVVVEGPVSSMELGNLTSSTEYLVSVLPVYESGVGKSLQGRATTAPLPPPGPLTLAAVTPRTLHVTWPPSAGVTQYLVQYLLATSTGEEQKREVHVGQPEVLLDGLEPGQDYDVSVQSLRGPEASEVQSIRARTSALGPPRHLTFSDVRYNSTCVSWEAQRPVRLVKVSYISSDGSHSGQTQVPGNLTSATLGPLSSSTMYTVRVTCFYLGGGSSVLTGHVTTQKAPSPGQLSVMELPGDAVKLSWLATALSGVLVYQIKWMPLGEGKAREISVPGTLGTATLPGLMKHVEYEITILAYYRDGTRSDPVSLRYTPSAASRSPPSSLALSSETPNSLQVNWTPPSGHVLHYRLNYTLASGSGPEKSISVPGTRSHAVLRDLMSATKYRVLVSAVYRAGESMAVSATYRTAACPALHPDSSLSGFDLMVAFGLVAKEYASIRGVAMEPSALGVVPTFTLFKDAQLMRRVSDIYPATLPPEHTIVFLVRLLPETPREAFALWQMMAEDFQPILGVLLDAGRKSLTYFNHDSRAALQEVTFDLQDAKKIFFGSFHKVHIAVGHSKVRLYVDCRKVAERPIGDAGSPPTGGFITLGRLAKARGPRSSSATFQLQMLQIVCSDTWADKDRCCEIPALRDGETCPAFPSACAYSSETPGPPGPQGPPGLPGRNGPPGQQGHPGPKGEPGPPGQTGPEGPGGQQGSPGTQGRAVQGPMGPPGAKGEKGDQGLSGLQGLSGQQGIPGKTGLQGPKGMRGLEGPAGLPGPPGPRGFQGLAGARGTNGERGAPGAVGPTGLPGSKGERGEKGEPQSLATIFQLVSQACESAIRTHVLKLNSFLHENARPPMPFMAETAKLGRPRSIDPGLHNEALLPGDWGHILRPEDQGEPVTISHTSNPRLQEVQTPESLE.

The N-terminal stretch at 1–25 (MSLQGSYQHFCLWMFLGTTLALGQG) is a signal peptide. Positions 27–118 (VSSRLRLAVL…EFVIEDLKSQ (92 aa)) constitute a Fibronectin type-III 1 domain. The 176-residue stretch at 177 to 352 (DIIFLVDGSW…DTLAPLLSRL (176 aa)) folds into the VWFA domain. Fibronectin type-III domains are found at residues 377-466 (TPTR…APLP), 467-556 (PPGP…SALG), 557-644 (PPRH…TQKA), 646-735 (SPGQ…TPSA), and 740-831 (PPSS…ACPA). N-linked (GlcNAc...) asparagine glycosylation is present at Asn-433. Residues Asn-569 and Asn-604 are each glycosylated (N-linked (GlcNAc...) asparagine). The tract at residues 728–752 (SLRYTPSAASRSPPSSLALSSETPN) is disordered. A compositionally biased stretch (low complexity) spans 733-748 (PSAASRSPPSSLALSS). N-linked (GlcNAc...) asparagine glycosylation is present at Asn-771. In terms of domain architecture, Laminin G-like spans 840 to 1035 (GFDLMVAFGL…LQMLQIVCSD (196 aa)). 2 disordered regions span residues 1064–1220 (YSSE…EKGE) and 1291–1320 (LRPE…ESLE). Pro residues predominate over residues 1069–1080 (PGPPGPQGPPGL). 3 consecutive Collagen-like domains span residues 1069 to 1122 (PGPP…TQGR), 1125 to 1174 (QGPM…GPAG), and 1165 to 1221 (GMRG…KGEP). Residues 1081–1093 (PGRNGPPGQQGHP) show a composition bias toward low complexity. Positions 1106–1115 (GPEGPGGQQG) are enriched in gly residues. The span at 1140 to 1152 (QGLSGLQGLSGQQ) shows a compositional bias: low complexity. The span at 1302–1320 (ISHTSNPRLQEVQTPESLE) shows a compositional bias: polar residues.

The protein localises to the secreted. It is found in the extracellular space. Its function is as follows. Probable collagen protein. This is Collagen alpha-1(XX) chain (Col20a1) from Mus musculus (Mouse).